We begin with the raw amino-acid sequence, 308 residues long: Shikimate kinase 1, chloroplastic (308 aa).

A chloroplast-targeting transit peptide spans 1–62; it reads MEAGVGLALQ…RGSKPVAPLR (62 aa). Residue 103–110 participates in ATP binding; the sequence is GMMGSGKS. Residue Ser110 coordinates Mg(2+). Asp128, Arg153, and Gly175 together coordinate substrate. Arg214 contacts ATP.

This sequence belongs to the shikimate kinase family. It depends on Mg(2+) as a cofactor. In terms of tissue distribution, expressed in panicles.

It is found in the plastid. Its subcellular location is the chloroplast. The catalysed reaction is shikimate + ATP = 3-phosphoshikimate + ADP + H(+). It functions in the pathway metabolic intermediate biosynthesis; chorismate biosynthesis; chorismate from D-erythrose 4-phosphate and phosphoenolpyruvate: step 5/7. In terms of biological role, catalyzes the specific phosphorylation of the 3-hydroxyl group of shikimic acid using ATP as a cosubstrate. The sequence is that of Shikimate kinase 1, chloroplastic (SK1) from Oryza sativa subsp. japonica (Rice).